The primary structure comprises 65 residues: Small ribosomal subunit protein bS21B (65 aa).

This sequence belongs to the bacterial ribosomal protein bS21 family.

The protein is Small ribosomal subunit protein bS21B of Geobacter sulfurreducens (strain ATCC 51573 / DSM 12127 / PCA).